The sequence spans 759 residues: MEAVIEKECSALGGLFQTIISDMKGSYPVWEDFINKAGKLQSQLRTTVVAAAAFLDAFQKVADMATNTRGGTREIGSALTRMCMRHRSIEAKLRQFSSALIDCLINPLQEQMEEWKKVANQLDKDHAKEYKKARQEIKNKSSDTLKLQKKAKKVDAQGRGDIQPQLDSALQDVNDKYLLLEETEKQAVRKALIEERGRFCTFISMLRPVIEEEISMLGEITHLQTISEDLKSLTMDPHKLPSSSEQVILDLKGSDYSWSYQTPPSSPSTTMSRKSSVCSSLNSVNSSDSRSSGSHSHSPSSHYRYRSSNLAQQAPVRLSSVSSHDSGFISQDAFQSKSPSPMPPEAANQLSNGFSHCSLSSESHAGPVGAGPFPHCLPASRLLPRVTSVHLPDYAHYYTIGPGMFPSSQIPSWKDWAKPGPYDQPLVNTLQRRKEKREPDSNGGGPTTTGGPPAGAEEAQRPRSMTVSAATRPGEEMAACEELTLALSRGLQLDVQRSSRDSLQCSSGYSTQTTTPCCSEDTIPSQVSDYDYFSVSGDQEAEQQEFDKSSTIPRNSDISQSYRRMFQAKRPASTAGLPTTLGPAMVTPGVATIRRTPSTKPSVRRGTIGAGPIPIKTPVIPVKTPTVPDLPGVLPSPPDGPEERGEHSPESPSAGEGPQGVSNIPSSLWSGQAPVNPPLPGPKPSIPEEHRQAIPESEAEDQERDPPSATVSPGPIPESDPADLSPRESPQGEDMLNAIRRGVKLKKTTTNDRSAPRFS.

The 254-residue stretch at 1-254 folds into the IMD domain; sequence MEAVIEKECS…EQVILDLKGS (254 aa). Residues 108 to 157 are a coiled coil; the sequence is LQEQMEEWKKVANQLDKDHAKEYKKARQEIKNKSSDTLKLQKKAKKVDAQ. The tract at residues 259 to 309 is disordered; it reads SYQTPPSSPSTTMSRKSSVCSSLNSVNSSDSRSSGSHSHSPSSHYRYRSSN. T262 is modified (phosphothreonine). Phosphoserine is present on residues S265, S266, S275, and S326. Residues 331-354 are disordered; the sequence is QDAFQSKSPSPMPPEAANQLSNGF. Position 429 is a phosphothreonine (T429). Disordered regions lie at residues 431 to 472 and 569 to 759; these read QRRK…AATR and KRPA…PRFS. T607 carries the phosphothreonine modification. Over residues 612-627 the composition is skewed to low complexity; that stretch reads PIPIKTPVIPVKTPTV. 2 positions are modified to phosphoserine: S648 and S651. A compositionally biased stretch (polar residues) spans 660–670; it reads GVSNIPSSLWS. Residues 675–685 show a composition bias toward pro residues; it reads VNPPLPGPKPS. Positions 731 to 748 constitute a WH2 domain; the sequence is QGEDMLNAIRRGVKLKKT.

The protein belongs to the MTSS family. As to quaternary structure, binds to actin. As to expression, strongly expressed in the developing neurons and skeletal and cardiac muscles in embryos. Strongly expressed also in liver, outer layers of the kidney, and in the Purkinje cells of the brain.

Its subcellular location is the cytoplasm. It is found in the cytoskeleton. Inhibits the nucleation of actin filaments in vitro. The chain is Protein MTSS 1 from Mus musculus (Mouse).